We begin with the raw amino-acid sequence, 309 residues long: tRNA dimethylallyltransferase (309 aa).

Position 8–15 (8–15 (GPTATGKS)) interacts with ATP. 10–15 (TATGKS) is a substrate binding site. The interval 33–36 (DSRQ) is interaction with substrate tRNA.

It belongs to the IPP transferase family. As to quaternary structure, monomer. It depends on Mg(2+) as a cofactor.

The catalysed reaction is adenosine(37) in tRNA + dimethylallyl diphosphate = N(6)-dimethylallyladenosine(37) in tRNA + diphosphate. Catalyzes the transfer of a dimethylallyl group onto the adenine at position 37 in tRNAs that read codons beginning with uridine, leading to the formation of N6-(dimethylallyl)adenosine (i(6)A). The sequence is that of tRNA dimethylallyltransferase from Trichodesmium erythraeum (strain IMS101).